The following is a 727-amino-acid chain: Synaptic vesicle glycoprotein 2C (727 aa).

Residues 1-57 form an interaction with SYT1 region; sequence MEDSYKDRTSLMKGAKDIAKEVKKQTVKKVNQAVDRAQDEYTQRSYSRFQDEDDDDD. Topologically, residues 1 to 154 are cytoplasmic; it reads MEDSYKDRTS…CGHGRFQWAL (154 aa). The tract at residues 22 to 120 is disordered; it reads VKKQTVKKVN…QPKGDEYKDR (99 aa). Residues Ser75 and Ser76 each carry the phosphoserine modification. Residue Thr79 is modified to Phosphothreonine. The helical transmembrane segment at 155–175 threads the bilayer; sequence FFVLGMALMADGVEVFVVGFV. Topologically, residues 176–191 are extracellular; it reads LPSAETDLCIPNSGSG. A helical transmembrane segment spans residues 192-212; sequence WLGSIVYLGMMVGAFFWGGLA. Residues 213 to 226 are Cytoplasmic-facing; the sequence is DKVGRKQSLLICMS. Residues 227 to 247 traverse the membrane as a helical segment; the sequence is VNGFFAFLSSFVQGYGFFLLC. Arg248 is a topological domain (extracellular). A helical membrane pass occupies residues 249–269; the sequence is LLSGFGIGGAIPTVFSYFAEV. The Cytoplasmic segment spans residues 270–280; sequence LAREKRGEHLS. A helical membrane pass occupies residues 281-301; that stretch reads WLCMFWMIGGIYASAMAWAII. Residues 302–320 are Extracellular-facing; the sequence is PHYGWSFSMGSAYQFHSWR. Residues 321-341 traverse the membrane as a helical segment; the sequence is VFVIVCALPCVSSVVALTFMP. Residues 342–437 lie on the Cytoplasmic side of the membrane; the sequence is ESPRFLLEVG…PVRENTIKLT (96 aa). The helical transmembrane segment at 438–458 threads the bilayer; the sequence is IVWFTLSFGYYGLSVWFPDVI. The Extracellular portion of the chain corresponds to 459–578; that stretch reads KHLQSDEYAL…CQITFDDDYS (120 aa). A Phosphotyrosine modification is found at Tyr466. 5 N-linked (GlcNAc...) asparagine glycosylation sites follow: Asn480, Asn484, Asn534, Asn559, and Asn565. The segment at 529-566 is (Microbial infection) C.botulinum neurotoxin type A-binding; that stretch reads NTYFKNCTFIDTLFENTDFEPYKFIDSEFQNCSFLHNK. A helical transmembrane segment spans residues 579-599; that stretch reads AYWIYFVNFLGTLAVLPGNIV. Residues 600-609 are Cytoplasmic-facing; the sequence is SALLMDRIGR. A helical membrane pass occupies residues 610-630; sequence LTMLGGSMVLSGISCFFLWFG. Over 631 to 636 the chain is Extracellular; it reads TSESMM. A helical transmembrane segment spans residues 637–657; it reads IGMLCLYNGLTISAWNSLDVV. Residues 658 to 670 lie on the Cytoplasmic side of the membrane; that stretch reads TVELYPTDRRATG. A helical membrane pass occupies residues 671–693; the sequence is FGFLNALCKAAAVLGNLIFGSLV. Topologically, residues 694–697 are extracellular; the sequence is SITK. Residues 698–716 form a helical membrane-spanning segment; sequence AIPILLASTVLVCGGLVGL. Residues 717–727 are Cytoplasmic-facing; the sequence is RLPDTRTQVLM.

It belongs to the major facilitator superfamily. Interacts with SYT1 in a calcium-dependent manner. As to quaternary structure, (Microbial infection) Interacts with C.botulinum neurotoxin type A (BoNT/A, botA). In terms of assembly, (Microbial infection) Interacts with C.botulinum neurotoxin type F (BoNT/F). Interaction requires glycosylation of SV2 proteins. Post-translationally, N-glycosylated. As to expression, expressed at high levels in very few brain areas including the striatum, midbrain and hindbrain, and in the olfactory bulb. Expressed at lower levels in cerebrum, hippocampus and cerebellum (at protein level). Mainly expressed in brain; also detected in lung, liver, kidney.

Its subcellular location is the cytoplasmic vesicle. It is found in the secretory vesicle. The protein resides in the synaptic vesicle membrane. Functionally, plays a role in the control of regulated secretion in neural and endocrine cells, enhancing selectively low-frequency neurotransmission. Positively regulates vesicle fusion by maintaining the readily releasable pool of secretory vesicles. Its function is as follows. (Microbial infection) Receptor for C.botulinum neurotoxin type A (BoNT/A, botA); the toxin binds Sv2c via extracellular loop 4. Restores uptake of BoNT/A in rat cells that are deleted for SV2 receptor. In terms of biological role, (Microbial infection) Possible receptor for C.botulinum neurotoxin type D (BoNT/D, botD); BoNT/D does not bind to extracellular loop 4 as do BoNT/A and BoNT/E. Another group does not find a convincing interaction with SV2. (Microbial infection) Receptor for C.botulinum neurotoxin type F (BoNT/F); binding requires glycosylation of Asn-573. The polypeptide is Synaptic vesicle glycoprotein 2C (Sv2c) (Rattus norvegicus (Rat)).